Consider the following 109-residue polypeptide: MVKNSFISIISQEENKENRGSVEFQIVSFTNKIDRLTSHLQLHKKDYLSERGLLKILGKRHRLLAYLSKKTRVDYKEFKELIDQLDKTKTRVDYKEFKELIDQLEKKTR.

Belongs to the universal ribosomal protein uS15 family. As to quaternary structure, part of the 30S ribosomal subunit.

The protein resides in the plastid. It is found in the chloroplast. The chain is Small ribosomal subunit protein uS15c (rps15-A) from Trachelium caeruleum (Blue throatwort).